Here is a 234-residue protein sequence, read N- to C-terminus: Interleukin-34 (234 aa).

The first 20 residues, 1-20, serve as a signal peptide directing secretion; that stretch reads MPWGLAWLYCLGILLDVALG. Asn-99 is a glycosylation site (N-linked (GlcNAc...) asparagine). Residues 215 to 234 form a disordered region; that stretch reads PRQPPTSLPRSPSSNHGPLP. Positions 222–234 are enriched in polar residues; that stretch reads LPRSPSSNHGPLP.

It belongs to the IL-34 family. In terms of assembly, homodimer. Interacts with CSF1R.

The protein localises to the secreted. In terms of biological role, cytokine that promotes the proliferation, survival and differentiation of monocytes and macrophages. Promotes the release of pro-inflammatory chemokines, and thereby plays an important role in innate immunity and in inflammatory processes. Plays an important role in the regulation of osteoclast proliferation and differentiation, and in the regulation of bone resorption. Signaling via CSF1R and its downstream effectors stimulates phosphorylation of MAPK1/ERK2 AND MAPK3/ERK1. The chain is Interleukin-34 (Il34) from Rattus norvegicus (Rat).